A 1138-amino-acid chain; its full sequence is Serine/threonine/tyrosine-interacting-like protein 2 (1138 aa).

The segment at 1–20 is disordered; the sequence is MATGGDAEEEQVVPNEEDEA. In terms of domain architecture, Tyrosine-protein phosphatase spans 132–280; it reads NEVDEVWPNV…LRELNEKLME (149 aa). Phosphoserine is present on Ser-291. 8 disordered regions span residues 309-336, 348-473, 486-515, 552-575, 592-618, 660-694, 761-800, and 850-1117; these read EEED…VTLI, EWRK…TWDM, ARKY…DDEE, KKDS…GEKN, QKKV…AKKR, AAPS…LPNL, SGCL…VRGT, and FKKK…DEAI. Residues 316-331 are compositionally biased toward polar residues; the sequence is SHLSGSSLGKASQVSK. Phosphoserine is present on Ser-373. A compositionally biased stretch (acidic residues) spans 376–385; it reads DGDDCEDEDV. Residues 386–409 are compositionally biased toward basic and acidic residues; it reads ERIIQEWQSRNERYQAKGREQWNR. The residue at position 427 (Thr-427) is a Phosphothreonine. Ser-503 and Ser-555 each carry phosphoserine. 2 stretches are compositionally biased toward basic and acidic residues: residues 552–567 and 595–614; these read KKDS…HGTE and VGSE…DTVL. Residues 672-687 show a composition bias toward polar residues; the sequence is SVLSTQSHRSHASNMP. A compositionally biased stretch (low complexity) spans 773–788; sequence SSDVQSVLSSTSSLTS. Acidic residues predominate over residues 858-871; sequence DEDMSVGDRDEDTD. Ser-862 bears the Phosphoserine mark. The segment covering 878–897 has biased composition (polar residues); the sequence is RYSSRSNSQKPETDASSSLA. Ser-929 carries the phosphoserine modification. A compositionally biased stretch (low complexity) spans 936 to 947; that stretch reads SGSSRGRYTRSS. Basic and acidic residues predominate over residues 965-977; the sequence is RSQEQDTSFHEAN. Residue Ser-966 is modified to Phosphoserine. Positions 980 to 992 are enriched in polar residues; that stretch reads TVRNTSRFSSSTT. At Ser-1016 the chain carries Phosphoserine. 2 stretches are compositionally biased toward basic and acidic residues: residues 1035–1059 and 1074–1091; these read PEPR…KSDF and RSEE…EEGR. The span at 1095–1106 shows a compositional bias: polar residues; sequence GRQSQYRRSTNQ. Acidic residues predominate over residues 1107 to 1116; that stretch reads QEEEEMDDEA.

The protein belongs to the protein-tyrosine phosphatase family. Non-receptor class dual specificity subfamily.

It is found in the cytoplasm. Its subcellular location is the myofibril. It localises to the sarcomere. May be required for myofiber maturation. The protein is Serine/threonine/tyrosine-interacting-like protein 2 (Styxl2) of Mus musculus (Mouse).